We begin with the raw amino-acid sequence, 190 residues long: Large ribosomal subunit protein bL17 (190 aa).

Residues 135 to 165 (AKAAPAAEEAPAEEAPAAEEAATEEAPAAEE) show a composition bias toward low complexity. Positions 135–190 (AKAAPAAEEAPAEEAPAAEEAATEEAPAAEETATEEAAAEEAPAAEEAPAEEKDAK) are disordered.

It belongs to the bacterial ribosomal protein bL17 family. Part of the 50S ribosomal subunit. Contacts protein L32.

The sequence is that of Large ribosomal subunit protein bL17 from Pseudarthrobacter chlorophenolicus (strain ATCC 700700 / DSM 12829 / CIP 107037 / JCM 12360 / KCTC 9906 / NCIMB 13794 / A6) (Arthrobacter chlorophenolicus).